The primary structure comprises 457 residues: Chromosomal replication initiator protein DnaA (457 aa).

Residues 1 to 90 (MDTNNNIEKE…HSVDVRIEVA (90 aa)) form a domain I, interacts with DnaA modulators region. The interval 91-112 (PKIQINAQSNINYKAIKTSVKD) is domain II. The interval 113–323 (SYTFENFVVG…GAIIKISVNA (211 aa)) is domain III, AAA+ region. Gly-153, Gly-155, Lys-156, and Thr-157 together coordinate ATP. The segment at 324-457 (NLMNASIDLN…DKKTAFNSSE (134 aa)) is domain IV, binds dsDNA.

Belongs to the DnaA family. In terms of assembly, oligomerizes as a right-handed, spiral filament on DNA at oriC. Interacts via domain I with HobA. In a crystal with domains I and II of DnaA HobA forms tetramers with DnaA fragments bound at the dimer interface of the tetramer.

It localises to the cytoplasm. The protein resides in the cell inner membrane. Plays an essential role in the initiation and regulation of chromosomal replication. ATP-DnaA binds to the origin of replication (oriC) to initiate formation of the DNA replication initiation complex once per cell cycle. Binds the DnaA box (a 9 base pair repeat at the origin) and separates the double-stranded (ds)DNA. Forms a right-handed helical filament on oriC DNA; dsDNA binds to the exterior of the filament while single-stranded (ss)DNA is stabiized in the filament's interior. The ATP-DnaA-oriC complex binds and stabilizes one strand of the AT-rich DNA unwinding element (DUE), permitting loading of DNA polymerase. After initiation quickly degrades to an ADP-DnaA complex that is not apt for DNA replication. Binds acidic phospholipids. Its function is as follows. The DnaA box is 5'-TTATC[CA]A[CA]A-3' in this bacterium cycle. Multiple discrete DnaA-oriC complexes can be seen as DnaA levels increase. Binding of DnaA to oriC is increased by HobA; some chi-type structures can be seen by electron microscopy. Strand separation requires the DnaA boxes and adjacent DnaA-trio motifs but works equally well with ADP or ATP. This is Chromosomal replication initiator protein DnaA from Helicobacter pylori (strain ATCC 700392 / 26695) (Campylobacter pylori).